A 503-amino-acid polypeptide reads, in one-letter code: MSSIEGPVRVRFAPSPTGSLHIGGVRTALFNWLCARHYGGQFILRIEDTDEKRFVPGAADDISASLRWVGIDWDEGPDVGGPYGPYVQSERFEQGIYQPFINQLLEAGLAYMSFTTEEELAQMRAAAEAAGIKAFRFRGPERDWPLERQREEAASGKPYTIRLKTPLEGETRFRDLIRGGDEIVVQNNQLQDIVLIKSTGMPVYHFAHLVDDHLMKITHVMRGEEWVPSTPYHVLLYDFFGWPRPVFAHLPAILRQDGRGKLSKRKDDVATQRFRERGYLPETIFNYLALQGWSYDGVTEIMTRDELIARFTLERIQPSPARWNPEKLRDMNGIYIRKLTTEQLAERVLPFMQRAGLIGDPASETERAYLISLIPLIHERLEELQEAPDLLAFFYQDVVPGETYNPADLIPKKHDAAQTVALLRAAHEALSQQTDWTPPALETTLRALCEQLQVKPGPLFGAIRVAITGRSVAPPLFDTLAGVGRERSLSRLAAAIAALENLA.

Residues 14 to 24 (PSPTGSLHIGG) carry the 'HIGH' region motif. The 'KMSKS' region signature appears at 261–265 (KLSKR). Lys-264 lines the ATP pocket.

Belongs to the class-I aminoacyl-tRNA synthetase family. Glutamate--tRNA ligase type 1 subfamily. Monomer.

It is found in the cytoplasm. The catalysed reaction is tRNA(Glu) + L-glutamate + ATP = L-glutamyl-tRNA(Glu) + AMP + diphosphate. Catalyzes the attachment of glutamate to tRNA(Glu) in a two-step reaction: glutamate is first activated by ATP to form Glu-AMP and then transferred to the acceptor end of tRNA(Glu). The sequence is that of Glutamate--tRNA ligase from Chloroflexus aurantiacus (strain ATCC 29366 / DSM 635 / J-10-fl).